Reading from the N-terminus, the 346-residue chain is L-threonine dehydratase catabolic TdcB (346 aa).

59–60 (FT) is a binding site for AMP. N6-(pyridoxal phosphate)lysine is present on Lys64. Residues Gln94, 125 to 126 (GY), and Asn321 contribute to the AMP site.

Belongs to the serine/threonine dehydratase family. In the native structure, TdcB is in a dimeric form, whereas in the TdcB-AMP complex, it exists in a tetrameric form (dimer of dimers). The cofactor is pyridoxal 5'-phosphate.

It carries out the reaction L-threonine = 2-oxobutanoate + NH4(+). Its pathway is amino-acid degradation; L-threonine degradation via propanoate pathway; propanoate from L-threonine: step 1/4. Each protein molecule can bind up to four molecules of AMP, which act as an allosteric activator to the enzyme. Catalyzes the anaerobic formation of alpha-ketobutyrate and ammonia from threonine in a two-step reaction. The first step involved a dehydration of threonine and a production of enamine intermediates (aminocrotonate), which tautomerizes to its imine form (iminobutyrate). Both intermediates are unstable and short-lived. The second step is the nonenzymatic hydrolysis of the enamine/imine intermediates to form 2-ketobutyrate and free ammonia. In the low water environment of the cell, the second step is accelerated by RidA. In Staphylococcus aureus (strain USA300), this protein is L-threonine dehydratase catabolic TdcB (tdcB).